The sequence spans 304 residues: Porphobilinogen deaminase (304 aa).

Cys240 is modified (S-(dipyrrolylmethanemethyl)cysteine).

It belongs to the HMBS family. As to quaternary structure, monomer. The cofactor is dipyrromethane.

It carries out the reaction 4 porphobilinogen + H2O = hydroxymethylbilane + 4 NH4(+). It functions in the pathway porphyrin-containing compound metabolism; protoporphyrin-IX biosynthesis; coproporphyrinogen-III from 5-aminolevulinate: step 2/4. Its function is as follows. Tetrapolymerization of the monopyrrole PBG into the hydroxymethylbilane pre-uroporphyrinogen in several discrete steps. This Xanthomonas campestris pv. campestris (strain ATCC 33913 / DSM 3586 / NCPPB 528 / LMG 568 / P 25) protein is Porphobilinogen deaminase.